Reading from the N-terminus, the 539-residue chain is Acid-sensing ion channel 4 (539 aa).

At M1 to T68 the chain is on the cytoplasmic side. Residues L69–A89 form a helical membrane-spanning segment. Residues R90–A438 lie on the Extracellular side of the membrane. 2 cysteine pairs are disulfide-bonded: C118–C202 and C180–C187. N-linked (GlcNAc...) asparagine glycans are attached at residues N191, N243, N341, and N376. 5 disulfide bridges follow: C296/C375, C318/C371, C322/C369, C331/C353, and C333/C345. The helical transmembrane segment at L439 to L459 threads the bilayer. Positions G452–S454 match the GAS motif; ion selectivity filter motif. Over E460 to C539 the chain is Cytoplasmic. The disordered stretch occupies residues E501–G531.

Belongs to the amiloride-sensitive sodium channel (TC 1.A.6) family. ASIC4 subfamily. As to quaternary structure, homotrimer. Heterotrimer; with other ASIC proteins producing functional channels. In terms of tissue distribution, expressed in brain, spinal cord and dorsal root ganglion (DRG). Expressed by a subset of sensory neurons in the DRG. Expressed by granule cells in the cerebellar cortex. In hippocampus, expression is detected in dentate gyrus granule cells, in pyramidal cells of CA1-CA3 subfields and in interneurons of the striatum oriens and radiatum of all subfields. In cerebral cortex expressed in small, medium and large pyramidal cells in layers 2, 3 and 5 respectively. Also expressed in striatum, globus pallidus, inferior and superior calliculi, amygdala, magnocellular preoptic nucleus, islands of Calleja and large neurons of olfactory tubercules.

It localises to the cell membrane. Its function is as follows. Does not exhibit measurable stand-alone pH-gated sodium channel activity but may form pH-gated heterotrimeric sodium channels. Its activity could also depend on alternative gating mechanisms. This is Acid-sensing ion channel 4 from Rattus norvegicus (Rat).